A 391-amino-acid chain; its full sequence is Large ribosomal subunit protein uL3 (391 aa).

Residues 1–10 show a composition bias toward basic and acidic residues; the sequence is MSHRKFEAPR. The tract at residues 1–41 is disordered; the sequence is MSHRKFEAPRHGSLGFRPRRRTRHHRGRCRSFPKDDPSKKP. Basic residues predominate over residues 17–31; it reads RPRRRTRHHRGRCRS.

Belongs to the universal ribosomal protein uL3 family.

Its subcellular location is the cytoplasm. Functionally, the L3 protein is a component of the large subunit of cytoplasmic ribosomes. This is Large ribosomal subunit protein uL3 (RPL3) from Tetrahymena thermophila.